The sequence spans 421 residues: Ribulose bisphosphate carboxylase large chain (421 aa).

Substrate contacts are provided by Asn68 and Thr118. Lys120 acts as the Proton acceptor in catalysis. Position 122 (Lys122) interacts with substrate. Mg(2+) is bound by residues Lys146, Asp148, and Glu149. The residue at position 146 (Lys146) is an N6-carboxylysine. Catalysis depends on His239, which acts as the Proton acceptor. Positions 240, 272, and 324 each coordinate substrate.

Belongs to the RuBisCO large chain family. Type I subfamily. Heterohexadecamer of 8 large chains and 8 small chains; disulfide-linked. The disulfide link is formed within the large subunit homodimers. Mg(2+) is required as a cofactor. The disulfide bond which can form in the large chain dimeric partners within the hexadecamer appears to be associated with oxidative stress and protein turnover.

Its subcellular location is the plastid. It is found in the chloroplast. It carries out the reaction 2 (2R)-3-phosphoglycerate + 2 H(+) = D-ribulose 1,5-bisphosphate + CO2 + H2O. The enzyme catalyses D-ribulose 1,5-bisphosphate + O2 = 2-phosphoglycolate + (2R)-3-phosphoglycerate + 2 H(+). Its function is as follows. RuBisCO catalyzes two reactions: the carboxylation of D-ribulose 1,5-bisphosphate, the primary event in carbon dioxide fixation, as well as the oxidative fragmentation of the pentose substrate in the photorespiration process. Both reactions occur simultaneously and in competition at the same active site. The polypeptide is Ribulose bisphosphate carboxylase large chain (rbcL) (Aegilops tauschii (Tausch's goatgrass)).